Reading from the N-terminus, the 264-residue chain is Small ribosomal subunit protein uS2 (264 aa).

It belongs to the universal ribosomal protein uS2 family.

This Helicobacter pylori (strain P12) protein is Small ribosomal subunit protein uS2.